Consider the following 122-residue polypeptide: Small ribosomal subunit protein uS13 (122 aa).

Residues 95–122 (NLPVRGQRTHTNARTRKGKAKPIAGKKK) form a disordered region.

This sequence belongs to the universal ribosomal protein uS13 family. In terms of assembly, part of the 30S ribosomal subunit. Forms a loose heterodimer with protein S19. Forms two bridges to the 50S subunit in the 70S ribosome.

In terms of biological role, located at the top of the head of the 30S subunit, it contacts several helices of the 16S rRNA. In the 70S ribosome it contacts the 23S rRNA (bridge B1a) and protein L5 of the 50S subunit (bridge B1b), connecting the 2 subunits; these bridges are implicated in subunit movement. Contacts the tRNAs in the A and P-sites. In Methylobacterium sp. (strain 4-46), this protein is Small ribosomal subunit protein uS13.